The sequence spans 198 residues: DnaJ homolog subfamily C member 5 (198 aa).

Residues S8, S10, S12, and S15 each carry the phosphoserine modification. The J domain occupies 13 to 82 (GESLYHVLGL…RNIYDKYGSL (70 aa)). Y17 carries the phosphotyrosine modification. K56 carries the N6-acetyllysine modification. The residue at position 151 (S151) is a Phosphoserine.

Homodimer. Interacts with the chaperone complex consisting of HSC70 and SGTA. Interacts with ZDHHC13 (via ANK repeats). Interacts with ZDHHC17 (via ANK repeats). Interacts with SYT1, SYT5 and SYT7, and with SYT9, forming a complex with SNAP25. The interaction with SYT9 is stimulated tenfold in presence of calcium. Formation of the chaperone complex DNAJC5/HSC70 is not regulated by phosphorylation. Ser-10 phosphorylation induces an order-to-disorder transition triggering the interaction with Lys-58. This conformational switch modulates DNAJC5's cellular functions by reducing binding to syntaxin and synaptogamin without altering HSC70 interactions. Post-translationally, palmitoylated. Could be palmitoylated by DHHC3, DHHC7, DHHC15 and DHHC17. Palmitoylation occurs probably in the cysteine-rich domain and regulates DNAJC5 membrane attachment.

The protein localises to the cytoplasm. Its subcellular location is the cytosol. The protein resides in the membrane. It localises to the cytoplasmic vesicle. It is found in the secretory vesicle. The protein localises to the chromaffin granule membrane. Its subcellular location is the melanosome. The protein resides in the cell membrane. In terms of biological role, acts as a co-chaperone for the SNARE protein SNAP-25. Involved in the calcium-mediated control of a late stage of exocytosis. Acts as a general chaperone in regulated exocytosis. May have an important role in presynaptic function. May be involved in calcium-dependent neurotransmitter release at nerve endings. This chain is DnaJ homolog subfamily C member 5, found in Mus musculus (Mouse).